Consider the following 208-residue polypeptide: 3-isopropylmalate dehydratase small subunit 2 (208 aa).

It belongs to the LeuD family. LeuD type 1 subfamily. As to quaternary structure, heterodimer of LeuC and LeuD.

It carries out the reaction (2R,3S)-3-isopropylmalate = (2S)-2-isopropylmalate. It functions in the pathway amino-acid biosynthesis; L-leucine biosynthesis; L-leucine from 3-methyl-2-oxobutanoate: step 2/4. In terms of biological role, catalyzes the isomerization between 2-isopropylmalate and 3-isopropylmalate, via the formation of 2-isopropylmaleate. This chain is 3-isopropylmalate dehydratase small subunit 2 (leuD2), found in Salmonella typhimurium (strain LT2 / SGSC1412 / ATCC 700720).